Reading from the N-terminus, the 328-residue chain is Nicotianamine synthase 1 (328 aa).

The protein belongs to the nicotianamine synthase (NAS)-like family. As to expression, in roots but not in leaves.

The catalysed reaction is 3 S-adenosyl-L-methionine = nicotianamine + 3 S-methyl-5'-thioadenosine + 3 H(+). Functionally, synthesizes nicotianamine, a polyamine that is the first intermediate in the synthesis of the phytosiderophores of the mugineic acid type found in gramineae which serves as a sensor for the physiological iron status within the plant, and/or might be involved in the transport of iron. In Hordeum vulgare (Barley), this protein is Nicotianamine synthase 1 (NAS1).